The following is a 606-amino-acid chain: Calmegin (606 aa).

The first 19 residues, 1-19 (MRFQGFWLCLGLLFISVNA), serve as a signal peptide directing secretion. The Lumenal portion of the chain corresponds to 20–466 (EFMDDSVEME…QLMSATEQRP (447 aa)). At Lys124 the chain carries N6-acetyllysine. A disulfide bond links Cys147 and Cys181. Residues 255–308 (PPINPPKEIEDPTDEKPDDWDERAKIPDASAVKPEDWDESEPPQIVDSSAVKPD) form a disordered region. 8 consecutive repeat copies span residues 263-276 (IEDP…DWDE), 280-293 (IPDA…DWDE), 299-312 (IVDS…GWLD), 318-331 (IPDP…DWNE), 335-348 (GEWE…PACR), 352-365 (GEWS…PKYK), 366-379 (GIWR…PNYQ), and 380-393 (GIWS…PDYF). The segment covering 265-275 (DPTDEKPDDWD) has biased composition (acidic residues). The interval 313–346 (NEPEFIPDPNAEKPFDWNEDMDGEWEAPHISNPA) is interaction with PPIB. A disulfide bridge connects residues Cys347 and Cys351. The helical transmembrane segment at 467 to 487 (WLWFIYLLTAALPIALIGSFC) threads the bilayer. Topologically, residues 488-606 (WPRKVKKKYE…SVRKRRVRKE (119 aa)) are cytoplasmic. Positions 518–544 (EVKEEKAALEKPVDLEEEKKQSDGEIV) are enriched in basic and acidic residues. Positions 518–606 (EVKEEKAALE…SVRKRRVRKE (89 aa)) are disordered. Acidic residues predominate over residues 545–567 (EKEEEGEPEEKSEEEIEIIEGQE). Ser556, Ser572, Ser575, Ser577, Ser587, Ser590, and Ser597 each carry phosphoserine. The segment covering 568–579 (EGNKSNKSGSED) has biased composition (basic and acidic residues). Residues 597 to 606 (SVRKRRVRKE) are compositionally biased toward basic residues.

The protein belongs to the calreticulin family. In terms of assembly, interacts with PPIB and PDILT. Interacts with ADAM2.

The protein localises to the endoplasmic reticulum membrane. Its function is as follows. Functions during spermatogenesis as a chaperone for a range of client proteins that are important for sperm adhesion onto the egg zona pellucida and for subsequent penetration of the zona pellucida. Required for normal sperm migration from the uterus into the oviduct. Required for normal male fertility. Binds calcium ions. This is Calmegin (CLGN) from Bos taurus (Bovine).